The following is a 75-amino-acid chain: Large ribosomal subunit protein bL31 (75 aa).

This sequence belongs to the bacterial ribosomal protein bL31 family. Type A subfamily. In terms of assembly, part of the 50S ribosomal subunit.

Its function is as follows. Binds the 23S rRNA. The protein is Large ribosomal subunit protein bL31 of Chlorobium phaeovibrioides (strain DSM 265 / 1930) (Prosthecochloris vibrioformis (strain DSM 265)).